A 247-amino-acid polypeptide reads, in one-letter code: 5'-nucleotidase SurE (247 aa).

Residues aspartate 8, aspartate 9, serine 39, and asparagine 91 each coordinate a divalent metal cation.

Belongs to the SurE nucleotidase family. The cofactor is a divalent metal cation.

It is found in the cytoplasm. The catalysed reaction is a ribonucleoside 5'-phosphate + H2O = a ribonucleoside + phosphate. Functionally, nucleotidase that shows phosphatase activity on nucleoside 5'-monophosphates. This is 5'-nucleotidase SurE from Chromobacterium violaceum (strain ATCC 12472 / DSM 30191 / JCM 1249 / CCUG 213 / NBRC 12614 / NCIMB 9131 / NCTC 9757 / MK).